Reading from the N-terminus, the 102-residue chain is MYAIIKHSGKQYRVSQGDELKLDRFEAEVKSSVEVSEVLAVCDKELKVGAPFVAGAKVVLEVIAHGKDKKVVIYKKRRRKDSKLKRGFRRQFTRVRVVDIKA.

This sequence belongs to the bacterial ribosomal protein bL21 family. Part of the 50S ribosomal subunit. Contacts protein L20.

Its function is as follows. This protein binds to 23S rRNA in the presence of protein L20. This Campylobacter lari (strain RM2100 / D67 / ATCC BAA-1060) protein is Large ribosomal subunit protein bL21.